The sequence spans 507 residues: Pyruvate kinase (507 aa).

Arg50 serves as a coordination point for substrate. K(+) is bound by residues Asn52, Ser54, Asp84, and Thr85. 52 to 55 (NFSH) contacts ATP. Positions 91 and 177 each coordinate ATP. Glu242 serves as a coordination point for Mg(2+). Residues Gly265, Asp266, and Thr298 each coordinate substrate. Asp266 contacts Mg(2+).

This sequence belongs to the pyruvate kinase family. As to quaternary structure, homotetramer. It depends on Mg(2+) as a cofactor. Requires K(+) as cofactor.

It carries out the reaction pyruvate + ATP = phosphoenolpyruvate + ADP + H(+). Its pathway is carbohydrate degradation; glycolysis; pyruvate from D-glyceraldehyde 3-phosphate: step 5/5. The protein is Pyruvate kinase (pyk) of Dictyostelium discoideum (Social amoeba).